We begin with the raw amino-acid sequence, 314 residues long: Inositol oxygenase 5 (314 aa).

Residues R54 and 112-114 (DES) contribute to the substrate site. The Fe cation site is built by H125, H150, and D151. Residues K154 and 171–172 (GD) each bind substrate. Fe cation-binding residues include H223, H249, and D282. A substrate-binding site is contributed by 249 to 250 (HS).

The protein belongs to the myo-inositol oxygenase family. Fe cation is required as a cofactor. As to expression, expressed in flowers and siliques.

The protein localises to the cytoplasm. It catalyses the reaction myo-inositol + O2 = D-glucuronate + H2O + H(+). Its pathway is polyol metabolism; myo-inositol degradation into D-glucuronate; D-glucuronate from myo-inositol: step 1/1. In terms of biological role, involved in the biosynthesis of UDP-glucuronic acid (UDP-GlcA), providing nucleotide sugars for cell-wall polymers. May be also involved in plant ascorbate biosynthesis. In Arabidopsis thaliana (Mouse-ear cress), this protein is Inositol oxygenase 5 (MIOX5).